Reading from the N-terminus, the 210-residue chain is Transcriptional regulator DauR (210 aa).

Belongs to the DauR family.

In terms of biological role, dauR represses the dauBAR operon. This chain is Transcriptional regulator DauR, found in Pseudomonas aeruginosa (strain ATCC 15692 / DSM 22644 / CIP 104116 / JCM 14847 / LMG 12228 / 1C / PRS 101 / PAO1).